Here is a 387-residue protein sequence, read N- to C-terminus: MGDIEFKSSPEFSLGMEIELQLLNPDTLQLVDGISPLLAQTPENSWIQPEFNQAMVEIASQVCSNIPELEANIVAILRDLKTRCQALGMTICTAGTYPCCDRFASITPIPRYLSQQNTSGYLADLMMTCALQLHVGMPSGDVAIDIMGRLKPYLPILLALSASSPFWWGHDTSFASFRQRFLSSMRTYGICPTFKNWQDFTNFFATAQNAGMFEIIRDIHWDLRPQPDFGTLEVRVMDAQPTIKESMMLAAFIHSLIVDMYHHSQGKQTEFLLTPLPWLIERENYFRASRWGLDANYIEDEQGNSRPIRNIVKDILNVLAETADTLGNSSYLFQLEKRLDQGASYIRQRRVFESTGSVKAVVASLVSELEAELAIKSRQEAVAYGWL.

It belongs to the glutamate--cysteine ligase type 2 family. YbdK subfamily.

The enzyme catalyses L-cysteine + L-glutamate + ATP = gamma-L-glutamyl-L-cysteine + ADP + phosphate + H(+). Functionally, ATP-dependent carboxylate-amine ligase which exhibits weak glutamate--cysteine ligase activity. The protein is Putative glutamate--cysteine ligase 2 of Trichormus variabilis (strain ATCC 29413 / PCC 7937) (Anabaena variabilis).